The following is a 396-amino-acid chain: 2-(3-amino-3-carboxypropyl)histidine synthase subunit 1 (396 aa).

[4Fe-4S] cluster-binding residues include Cys89, Cys194, and Cys323. The tract at residues 372-396 (TNNNEANRPKREKRKPHIVVRTEAS) is disordered.

It belongs to the DPH1/DPH2 family. DPH1 subfamily. In terms of assembly, component of the 2-(3-amino-3-carboxypropyl)histidine synthase complex composed of dph-1, dph-2, dph-3 and a NADH-dependent reductase. The cofactor is [4Fe-4S] cluster.

The catalysed reaction is L-histidyl-[translation elongation factor 2] + S-adenosyl-L-methionine = 2-[(3S)-amino-3-carboxypropyl]-L-histidyl-[translation elongation factor 2] + S-methyl-5'-thioadenosine + H(+). Its pathway is protein modification; peptidyl-diphthamide biosynthesis. In terms of biological role, catalyzes the first step of diphthamide biosynthesis, a post-translational modification of histidine which occurs in elongation factor 2. Dph-1 and dph-2 transfer a 3-amino-3-carboxypropyl (ACP) group from S-adenosyl-L-methionine (SAM) to a histidine residue, the reaction is assisted by a reduction system comprising dph-3 and a NADH-dependent reductase. The protein is 2-(3-amino-3-carboxypropyl)histidine synthase subunit 1 (dph-1) of Caenorhabditis elegans.